A 274-amino-acid chain; its full sequence is Phloretin hydrolase (274 aa).

Histidine 123, glutamate 154, histidine 251, and glutamate 255 together coordinate Zn(2+).

Belongs to the DAPG/phloretin hydrolase family. Homodimer. Zn(2+) is required as a cofactor.

It is found in the cytoplasm. The catalysed reaction is phloretin + H2O = phloretate + 1,3,5-trihydroxybenzene + H(+). Its function is as follows. Catalyzes the hydrolytic C-C cleavage of phloretin to phloroglucinol and 3-(4-hydroxyphenyl)propionic acid during flavonoid degradation. Also hydrolyzes other C-acylated phenols. The chain is Phloretin hydrolase (phy) from Eubacterium ramulus.